Reading from the N-terminus, the 356-residue chain is tRNA-specific 2-thiouridylase MnmA 1 (356 aa).

ATP contacts are provided by residues 8 to 15 (GMSGGVDS) and M34. Catalysis depends on C103, which acts as the Nucleophile. C103 and C199 form a disulfide bridge. G127 contributes to the ATP binding site. An interaction with tRNA region spans residues 149–151 (KDQ). C199 serves as the catalytic Cysteine persulfide intermediate. The segment at 305–306 (RY) is interaction with tRNA.

It belongs to the MnmA/TRMU family.

Its subcellular location is the cytoplasm. It carries out the reaction S-sulfanyl-L-cysteinyl-[protein] + uridine(34) in tRNA + AH2 + ATP = 2-thiouridine(34) in tRNA + L-cysteinyl-[protein] + A + AMP + diphosphate + H(+). Catalyzes the 2-thiolation of uridine at the wobble position (U34) of tRNA, leading to the formation of s(2)U34. This Clostridium botulinum (strain Loch Maree / Type A3) protein is tRNA-specific 2-thiouridylase MnmA 1.